A 123-amino-acid chain; its full sequence is Large ribosomal subunit protein bL21 (123 aa).

The protein belongs to the bacterial ribosomal protein bL21 family. In terms of assembly, part of the 50S ribosomal subunit. Contacts protein L20.

This protein binds to 23S rRNA in the presence of protein L20. In Sinorhizobium fredii (strain NBRC 101917 / NGR234), this protein is Large ribosomal subunit protein bL21.